A 472-amino-acid polypeptide reads, in one-letter code: Probable glycine dehydrogenase (decarboxylating) subunit 2 (472 aa).

K268 carries the post-translational modification N6-(pyridoxal phosphate)lysine.

It belongs to the GcvP family. C-terminal subunit subfamily. The glycine cleavage system is composed of four proteins: P, T, L and H. In this organism, the P 'protein' is a heterodimer of two subunits. The cofactor is pyridoxal 5'-phosphate.

It carries out the reaction N(6)-[(R)-lipoyl]-L-lysyl-[glycine-cleavage complex H protein] + glycine + H(+) = N(6)-[(R)-S(8)-aminomethyldihydrolipoyl]-L-lysyl-[glycine-cleavage complex H protein] + CO2. Functionally, the glycine cleavage system catalyzes the degradation of glycine. The P protein binds the alpha-amino group of glycine through its pyridoxal phosphate cofactor; CO(2) is released and the remaining methylamine moiety is then transferred to the lipoamide cofactor of the H protein. The sequence is that of Probable glycine dehydrogenase (decarboxylating) subunit 2 from Thermoplasma volcanium (strain ATCC 51530 / DSM 4299 / JCM 9571 / NBRC 15438 / GSS1).